The following is a 790-amino-acid chain: Tumor necrosis factor alpha-induced protein 3 (790 aa).

Residue Ala-2 is modified to N-acetylalanine. The tract at residues Pro-58–Glu-300 is TRAF-binding. One can recognise an OTU domain in the interval Leu-92 to Leu-263. The active site involves Asp-100. Cys-103 functions as the Nucleophile in the catalytic mechanism. Interaction with ubiquitin stretches follow at residues Leu-157–Tyr-159, Ser-190–Glu-192, and Phe-224–Leu-227. His-256 functions as the Proton acceptor in the catalytic mechanism. Over residues Gln-357–His-368 the composition is skewed to basic and acidic residues. Positions Gln-357–Val-377 are disordered. The tract at residues Ala-369–Cys-775 is interaction with TNIP1. The A20-type 1 zinc-finger motif lies at Ser-381–Asn-416. Positions Lys-386–Ser-453 are interaction with RIPK1. Residues Cys-387, Cys-392, Cys-404, and Cys-407 each coordinate Zn(2+). 2 disordered regions span residues Gln-415 to Ala-434 and Ala-447 to Phe-468. The residue at position 459 (Ser-459) is a Phosphoserine. 2 A20-type zinc fingers span residues Glu-472–Ser-507 and His-515–Ser-548. Zn(2+) contacts are provided by Cys-478, Cys-483, Cys-495, Cys-498, Cys-521, Cys-524, Cys-536, and Cys-539. Residues Ser-550–Gly-583 form a disordered region. Position 575 is a phosphoserine (Ser-575). The A20-type 4 zinc finger occupies Arg-601–His-636. Residues Ser-605–Ile-655 are required for proteasomal degradation of UBE2N and UBE2D3, TRAF6 deubiquitination, and TAX1BP1 interaction with UBE2N. The sufficient for inhibitory activity of TNF-induced NF-kappa-B activity stretch occupies residues Lys-606–Gly-790. Positions 607, 612, 624, and 627 each coordinate Zn(2+). Ser-645 bears the Phosphoserine mark. The A20-type 5 zinc finger occupies Phe-651–Phe-686. Cys-657, Cys-662, Cys-674, and Cys-677 together coordinate Zn(2+). Positions Ala-689–Pro-705 are enriched in basic and acidic residues. The disordered stretch occupies residues Ala-689 to Ser-712. The segment at Arg-697–Gly-790 is required for lysosomal localization and for TRAF2 lysosomal degradation. A20-type zinc fingers lie at residues Ser-710 to Pro-745 and Asp-756 to Gly-790. Residues Cys-716, Cys-721, Cys-733, Cys-736, Cys-762, Cys-767, Cys-779, and Cys-782 each coordinate Zn(2+).

This sequence belongs to the peptidase C64 family. As to quaternary structure, homodimer. Interacts with TNIP1, TAX1BP1 and TRAF2. Interacts with RNF11, ITCH and TAX1BP1 only after TNF stimulation; these interaction are transient and they are lost after 1 hour of stimulation with TNF. Interacts with YWHAZ and YWHAH. Interacts with IKBKG; the interaction is induced by TNF stimulation and by polyubiquitin. Interacts with RIPK1. Interacts with UBE2N; the interaction requires TAX1BP1. Interacts with TRAF6; the interaction is inhibited by HTLV-1 protein Tax. Proteolytically cleaved by MALT1 upon TCR stimulation; disrupts NF-kappa-B inhibitory function and results in increased IL-2 production. It is proposed that only a fraction of TNFAIP3 colocalized with TCR and CBM complex is cleaved, leaving the main TNFAIP3 pool intact.

The protein resides in the cytoplasm. It is found in the nucleus. It localises to the lysosome. It catalyses the reaction Thiol-dependent hydrolysis of ester, thioester, amide, peptide and isopeptide bonds formed by the C-terminal Gly of ubiquitin (a 76-residue protein attached to proteins as an intracellular targeting signal).. Its function is as follows. Ubiquitin-editing enzyme that contains both ubiquitin ligase and deubiquitinase activities. Involved in immune and inflammatory responses signaled by cytokines, such as TNF-alpha and IL-1 beta, or pathogens via Toll-like receptors (TLRs) through terminating NF-kappa-B activity. Essential component of a ubiquitin-editing protein complex, comprising also RNF11, ITCH and TAX1BP1, that ensures the transient nature of inflammatory signaling pathways. In cooperation with TAX1BP1 promotes disassembly of E2-E3 ubiquitin protein ligase complexes in IL-1R and TNFR-1 pathways; affected are at least E3 ligases TRAF6, TRAF2 and BIRC2, and E2 ubiquitin-conjugating enzymes UBE2N and UBE2D3. In cooperation with TAX1BP1 promotes ubiquitination of UBE2N and proteasomal degradation of UBE2N and UBE2D3. Upon TNF stimulation, deubiquitinates 'Lys-63'-polyubiquitin chains on RIPK1 and catalyzes the formation of 'Lys-48'-polyubiquitin chains. This leads to RIPK1 proteasomal degradation and consequently termination of the TNF- or LPS-mediated activation of NF-kappa-B. Deubiquitinates TRAF6 probably acting on 'Lys-63'-linked polyubiquitin. Upon T-cell receptor (TCR)-mediated T-cell activation, deubiquitinates 'Lys-63'-polyubiquitin chains on MALT1 thereby mediating disassociation of the CBM (CARD11:BCL10:MALT1) and IKK complexes and preventing sustained IKK activation. Deubiquitinates NEMO/IKBKG; the function is facilitated by TNIP1 and leads to inhibition of NF-kappa-B activation. Upon stimulation by bacterial peptidoglycans, probably deubiquitinates RIPK2. Can also inhibit I-kappa-B-kinase (IKK) through a non-catalytic mechanism which involves polyubiquitin; polyubiquitin promotes association with IKBKG and prevents IKK MAP3K7-mediated phosphorylation. Targets TRAF2 for lysosomal degradation. In vitro able to deubiquitinate 'Lys-11'-, 'Lys-48'- and 'Lys-63' polyubiquitin chains. Inhibitor of programmed cell death. Has a role in the function of the lymphoid system. Required for LPS-induced production of pro-inflammatory cytokines and IFN beta in LPS-tolerized macrophages. In Homo sapiens (Human), this protein is Tumor necrosis factor alpha-induced protein 3 (TNFAIP3).